The primary structure comprises 458 residues: Protein amnionless (458 aa).

A signal peptide spans 1-19 (MGALGRVLLWLQLCAMTRA). Topologically, residues 20–362 (AYKLWVPNTS…ELNQSSSGAG (343 aa)) are extracellular. A glycan (N-linked (GlcNAc...) asparagine) is linked at Asn-27. Intrachain disulfides connect Cys-43–Cys-96, Cys-137–Cys-213, Cys-205–Cys-211, Cys-223–Cys-249, Cys-234–Cys-250, and Cys-239–Cys-253. Positions 67–87 (SDMLLPLDGELVLASGAALSA) are interaction with CUBN. A VWFC domain is found at 203–254 (QACTDASGCVCGNAEMLPWICASLLQPLGGRCPQAACQDPLLPQGQCCDLCG). N-linked (GlcNAc...) asparagine glycosylation occurs at Asn-355. Residues 363–383 (LAGGVAALVLLALLGTVLLLL) traverse the membrane as a helical segment. Residues 384-458 (HRSGRLRWRR…LFAGEAEAEA (75 aa)) lie on the Cytoplasmic side of the membrane.

As to quaternary structure, interacts (via extracellular region) with CUBN/cubilin. This gives rise to a huge complex containing one AMN chain and three CUBN chains. Post-translationally, N-glycosylated. In terms of processing, a soluble form arises by proteolytic removal of the membrane anchor. In terms of tissue distribution, expressed in polarized epithelial cells which are specialized in resorption or transport, specifically kidney proximal tubules and intestinal epithelium.

The protein resides in the apical cell membrane. It is found in the cell membrane. It localises to the endosome membrane. Its subcellular location is the membrane. The protein localises to the coated pit. Functionally, membrane-bound component of the endocytic receptor formed by AMN and CUBN. Required for normal CUBN glycosylation and trafficking to the cell surface. The complex formed by AMN and CUBN is required for efficient absorption of vitamin B12. Required for normal CUBN-mediated protein transport in the kidney. The polypeptide is Protein amnionless (Amn) (Mus musculus (Mouse)).